The sequence spans 908 residues: WD repeat-containing protein 44 (908 aa).

Residues 1 to 163 (MMPLKMCTWG…SSADQLDASK (163 aa)) form a binding activity region. Phosphoserine occurs at positions 17, 40, 61, 71, 86, and 116. Polar residues-rich tracts occupy residues 108–120 (QQGS…QNAA) and 148–157 (NNLTEVSSAD). Disordered regions lie at residues 108–158 (QQGS…SADQ), 202–273 (APAK…KDNI), 309–341 (TAQE…RELT), 391–418 (VSND…RLKQ), and 454–474 (DEVF…GMPY). Phosphothreonine is present on residues Thr-151 and Thr-211. Residues 203-249 (PAKPPRHLTPEPDIVASTKKPVPARPPPPTNFPPPRPPPPSRPAPPP) form an important for interaction with ARHGAP26 AND ARHGAP10 region. Residues 225 to 248 (PARPPPPTNFPPPRPPPPSRPAPP) show a composition bias toward pro residues. At Ser-254 the chain carries Phosphoserine. Over residues 254–270 (SDLEFEALKTPDLDVPK) the composition is skewed to basic and acidic residues. Residue Thr-263 is modified to Phosphothreonine. Positions 326–339 (VMGPQRPRSNSGRE) are important for interaction with RAB11A. Residues Ser-334 and Ser-336 each carry the phosphoserine modification. 2 positions are modified to phosphothreonine: Thr-341 and Thr-396. Phosphoserine occurs at positions 398, 465, 466, and 467. A compositionally biased stretch (acidic residues) spans 462–471 (DDPSSSDDEG). Tyr-474 bears the Phosphotyrosine mark. One copy of the WD 1 repeat lies at 504–543 (EHMGAVWTMKFSHCGRLLASAGQDNIVRIWALKNAFDYFN). A disordered region spans residues 552-587 (EGRVSPSPSQESLSSSKSDTDMGVCSGTDEDPDDKN). Residues Ser-556 and Ser-560 each carry the phosphoserine modification. Positions 556–568 (SPSPSQESLSSSK) are enriched in low complexity. WD repeat units lie at residues 600–638 (GHTA…CLCC), 640–680 (QHID…VALW), 685–724 (GQTK…YHTQ), 735–774 (KVGR…LSMK), and 779–818 (VNSS…SKFT).

Interacts preferentially with the GTP-bound form of RAB11 when membrane-associated. Interacts with GRAF1/ARHGAP26 or GRAF2/ARHGAP10; the interaction connects the endoplasmic reticulum (ER) with the endosomal tubule. Interacts with VAPA (via MSP domain) or VAPB (via MSP domain); the interaction connects the ER with the endosomal tubule. Does not bind to other Rab and Rho small G proteins. Post-translationally, phosphorylated by ATK1; the phosphorylation stabilizes its interaction with RAB11A and RAB11B. As to expression, expressed in heart; brain; spleen; lung; liver; muscle and kidney.

Its subcellular location is the cytoplasm. The protein localises to the cytosol. It localises to the perinuclear region. The protein resides in the endosome membrane. It is found in the golgi apparatus. Its subcellular location is the trans-Golgi network. Functionally, downstream effector for Rab11 which regulates Rab11 intracellular membrane trafficking functions such as endocytic recycling, intracellular ciliogenesis and protein export. ATK1-mediated phosphorylation of WDR44 induces binding to Rab11 which activates endocytic recycling of transferrin receptor back to the plasma membrane. When bound to Rab11, prevents the formation of the ciliogenic Rab11-Rabin8/RAB3IP-RAB11FIP3 complex, therefore inhibiting preciliary trafficking and ciliogenesis. May participate in neo-synthesized protein export by connecting the endoplasmic reticulum (ER) with the endosomal tubule via direct interactions with the integral ER proteins VAPA or VAPB and the endosomal protein GRAFs (GRAF1/ARHGAP26 or GRAF2/ARHGAP10), which facilitates the transfer of proteins such as E-cadherin, MPP14 and CFTR into a Rab8-Rab10-Rab11-dependent export route. The protein is WD repeat-containing protein 44 of Rattus norvegicus (Rat).